The sequence spans 156 residues: MSDVILDLQLACDEARGLPAEADFLRWLQGVLPLFRDCAEVTVRLVDEAESHELNMTYRGKDRPTNVLSFPFEAPPEVELPLLGDLVICHQVVEREAQQQEKALEAHWAHMVVHGSLHLLGYDHIQDEEALEMESLETEIMQKLGYPDPYLAEKEA.

3 residues coordinate Zn(2+): histidine 114, histidine 118, and histidine 124.

The protein belongs to the endoribonuclease YbeY family. Zn(2+) serves as cofactor.

The protein resides in the cytoplasm. Single strand-specific metallo-endoribonuclease involved in late-stage 70S ribosome quality control and in maturation of the 3' terminus of the 16S rRNA. The sequence is that of Endoribonuclease YbeY from Sodalis glossinidius (strain morsitans).